The sequence spans 361 residues: Phenylalanine 4-monooxygenase, chloroplastic (361 aa).

The N-terminal 55 residues, 1 to 55 (MLALRQGALLLSARGGQTTHDNLQLCAGPSRRPRARWISSAPRPSTLVERHIRPQ), are a transit peptide targeting the chloroplast. The interval 47-67 (LVERHIRPQASTASDATTSTS) is disordered. Residues 56-67 (ASTASDATTSTS) are compositionally biased toward low complexity. Positions 227, 232, and 272 each coordinate Fe cation.

It belongs to the biopterin-dependent aromatic amino acid hydroxylase family. The cofactor is Fe(2+).

The protein localises to the plastid. It localises to the chloroplast. It carries out the reaction (6R)-L-erythro-5,6,7,8-tetrahydrobiopterin + L-phenylalanine + O2 = (4aS,6R)-4a-hydroxy-L-erythro-5,6,7,8-tetrahydrobiopterin + L-tyrosine. Functionally, catalyzes the hydroxylation of L-phenylalanine to L-tyrosine. Can functionally complement an Escherichia coli tyrosine auxotroph. This Chlamydomonas reinhardtii (Chlamydomonas smithii) protein is Phenylalanine 4-monooxygenase, chloroplastic.